The primary structure comprises 338 residues: Glycerol-3-phosphate dehydrogenase [NAD(P)+] (338 aa).

Residues W20 and K110 each contribute to the NADPH site. Residues K110, G141, and S143 each coordinate sn-glycerol 3-phosphate. A145 serves as a coordination point for NADPH. Sn-glycerol 3-phosphate is bound by residues K197, D250, S260, R261, and N262. The active-site Proton acceptor is K197. R261 contacts NADPH. Residue E287 coordinates NADPH.

Belongs to the NAD-dependent glycerol-3-phosphate dehydrogenase family.

It is found in the cytoplasm. It catalyses the reaction sn-glycerol 3-phosphate + NAD(+) = dihydroxyacetone phosphate + NADH + H(+). The enzyme catalyses sn-glycerol 3-phosphate + NADP(+) = dihydroxyacetone phosphate + NADPH + H(+). Its pathway is membrane lipid metabolism; glycerophospholipid metabolism. Its function is as follows. Catalyzes the reduction of the glycolytic intermediate dihydroxyacetone phosphate (DHAP) to sn-glycerol 3-phosphate (G3P), the key precursor for phospholipid synthesis. The chain is Glycerol-3-phosphate dehydrogenase [NAD(P)+] from Aster yellows witches'-broom phytoplasma (strain AYWB).